The primary structure comprises 393 residues: Chorismate synthase (393 aa).

Arg-39 and Arg-45 together coordinate NADP(+). Residues 133-135, 256-257, Gly-301, 316-320, and Arg-342 contribute to the FMN site; these read RSS, NA, and KPIPT.

Belongs to the chorismate synthase family. Homotetramer. FMNH2 serves as cofactor.

The enzyme catalyses 5-O-(1-carboxyvinyl)-3-phosphoshikimate = chorismate + phosphate. It participates in metabolic intermediate biosynthesis; chorismate biosynthesis; chorismate from D-erythrose 4-phosphate and phosphoenolpyruvate: step 7/7. Its function is as follows. Catalyzes the anti-1,4-elimination of the C-3 phosphate and the C-6 proR hydrogen from 5-enolpyruvylshikimate-3-phosphate (EPSP) to yield chorismate, which is the branch point compound that serves as the starting substrate for the three terminal pathways of aromatic amino acid biosynthesis. This reaction introduces a second double bond into the aromatic ring system. In Lysinibacillus sphaericus (strain C3-41), this protein is Chorismate synthase.